A 341-amino-acid chain; its full sequence is Two-component response regulator EHD1 (341 aa).

The Response regulatory domain maps to 12–127; the sequence is RVLVIDDDCS…ELSNIWQHIF (116 aa). Asp63 is modified (4-aspartylphosphate). Positions 195-254 constitute an HTH myb-type domain; that stretch reads DLGKSRLTWTTQLHRQFIAAVNHLGEDKAVPKKILGIMKVKHLTREQVASHLQKYRMQLK. Positions 225 to 250 form a DNA-binding region, H-T-H motif; it reads PKKILGIMKVKHLTREQVASHLQKYR.

Two-component system major event consists of a His-to-Asp phosphorelay between a sensor histidine kinase (HK) and a response regulator (RR). In plants, the His-to-Asp phosphorelay involves an additional intermediate named Histidine-containing phosphotransfer protein (HPt). This multistep phosphorelay consists of a His-Asp-His-Asp sequential transfer of a phosphate group between first a His and an Asp of the HK protein, followed by the transfer to a conserved His of the HPt protein and finally the transfer to an Asp in the receiver domain of the RR protein.

It is found in the nucleus. Transcriptional activator that acts as a floral inducer to promote short-day (SD) flowering pathway. Activates Hd3a and other FT-like genes independently from Hd1. May also activate MADS-box transcription factors involved in flowering regulation. This chain is Two-component response regulator EHD1 (EHD1), found in Oryza sativa subsp. indica (Rice).